A 72-amino-acid chain; its full sequence is DNA-directed RNA polymerase subunit omega (72 aa).

It belongs to the RNA polymerase subunit omega family. The RNAP catalytic core consists of 2 alpha, 1 beta, 1 beta' and 1 omega subunit. When a sigma factor is associated with the core the holoenzyme is formed, which can initiate transcription.

The enzyme catalyses RNA(n) + a ribonucleoside 5'-triphosphate = RNA(n+1) + diphosphate. Promotes RNA polymerase assembly. Latches the N- and C-terminal regions of the beta' subunit thereby facilitating its interaction with the beta and alpha subunits. The polypeptide is DNA-directed RNA polymerase subunit omega (Limosilactobacillus reuteri (strain DSM 20016) (Lactobacillus reuteri)).